The sequence spans 512 residues: Maturase K (512 aa).

The protein belongs to the intron maturase 2 family. MatK subfamily.

The protein resides in the plastid. Its subcellular location is the chloroplast. In terms of biological role, usually encoded in the trnK tRNA gene intron. Probably assists in splicing its own and other chloroplast group II introns. This Filarum manserichense protein is Maturase K.